Consider the following 424-residue polypeptide: 3-phosphoshikimate 1-carboxyvinyltransferase (424 aa).

3 residues coordinate 3-phosphoshikimate: Lys-21, Ser-22, and Arg-26. Lys-21 provides a ligand contact to phosphoenolpyruvate. Gly-92 and Arg-120 together coordinate phosphoenolpyruvate. 3-phosphoshikimate is bound by residues Ser-163, Ser-164, Gln-165, Ser-191, Asp-306, and Lys-333. Gln-165 is a binding site for phosphoenolpyruvate. The Proton acceptor role is filled by Asp-306. Phosphoenolpyruvate-binding residues include Arg-337, Arg-379, and Lys-405.

It belongs to the EPSP synthase family. In terms of assembly, monomer.

It is found in the cytoplasm. The catalysed reaction is 3-phosphoshikimate + phosphoenolpyruvate = 5-O-(1-carboxyvinyl)-3-phosphoshikimate + phosphate. It participates in metabolic intermediate biosynthesis; chorismate biosynthesis; chorismate from D-erythrose 4-phosphate and phosphoenolpyruvate: step 6/7. Catalyzes the transfer of the enolpyruvyl moiety of phosphoenolpyruvate (PEP) to the 5-hydroxyl of shikimate-3-phosphate (S3P) to produce enolpyruvyl shikimate-3-phosphate and inorganic phosphate. The chain is 3-phosphoshikimate 1-carboxyvinyltransferase from Clostridium perfringens (strain ATCC 13124 / DSM 756 / JCM 1290 / NCIMB 6125 / NCTC 8237 / Type A).